The following is a 746-amino-acid chain: Exostosin-1 (746 aa).

Topologically, residues 1–7 (MQAKKRY) are cytoplasmic. The helical; Signal-anchor for type II membrane protein transmembrane segment at 8–28 (FILLSAGSCLALLFYFGGLQF) threads the bilayer. Residues 29–746 (RASRSHSRRE…RKKYRDIERL (718 aa)) lie on the Lumenal side of the membrane. N-linked (GlcNAc...) asparagine glycosylation is present at asparagine 89. Intrachain disulfides connect cysteine 98–cysteine 103 and cysteine 109–cysteine 152. 2 residues coordinate a protein: leucine 166 and tyrosine 203. Residues lysine 267, lysine 269, tyrosine 271, and arginine 280 each contribute to the UDP site. Cysteine 298 and cysteine 312 form a disulfide bridge. Histidine 300 contributes to the a protein binding site. UDP is bound by residues tyrosine 319 and tyrosine 324. Asparagine 330 carries N-linked (GlcNAc...) asparagine glycosylation. 2 cysteine pairs are disulfide-bonded: cysteine 334-cysteine 355 and cysteine 652-cysteine 704. Arginine 346 and glutamate 349 together coordinate UDP.

The protein belongs to the glycosyltransferase 47 family. As to quaternary structure, part of the heparan sulfate polymerase, a dimeric complex composed of EXT1 and EXT2. Could also form homooligomeric complexes. Interacts with NDST1. Post-translationally, N-glycosylated.

Its subcellular location is the golgi apparatus membrane. The protein localises to the golgi apparatus. It localises to the cis-Golgi network membrane. It is found in the endoplasmic reticulum membrane. It catalyses the reaction 3-O-{alpha-D-GlcNAc-[(1-&gt;4)-beta-D-GlcA-(1-&gt;4)-alpha-D-GlcNAc](n)-(1-&gt;4)-beta-D-GlcA-(1-&gt;3)-beta-D-Gal-(1-&gt;3)-beta-D-Gal-(1-&gt;4)-beta-D-Xyl}-L-seryl-[protein] + UDP-alpha-D-glucuronate = 3-O-{[(1-&gt;4)-beta-D-GlcA-(1-&gt;4)-alpha-D-GlcNAc](n+1)-(1-&gt;4)-beta-D-GlcA-(1-&gt;3)-beta-D-Gal-(1-&gt;3)-beta-D-Gal-(1-&gt;4)-beta-D-Xyl}-L-seryl-[protein] + UDP + H(+). The protein operates within protein modification; protein glycosylation. In terms of biological role, glycosyltransferase forming with EXT2 the heterodimeric heparan sulfate polymerase which catalyzes the elongation of the heparan sulfate glycan backbone. Glycan backbone extension consists in the alternating transfer of (1-&gt;4)-beta-D-GlcA and (1-&gt;4)-alpha-D-GlcNAc residues from their respective UDP-sugar donors. Both EXT1 and EXT2 are required for the full activity of the polymerase since EXT1 bears the N-acetylglucosaminyl-proteoglycan 4-beta-glucuronosyltransferase activity within the complex while EXT2 carries the glucuronosyl-N-acetylglucosaminyl-proteoglycan 4-alpha-N-acetylglucosaminyltransferase activity. Heparan sulfate proteoglycans are ubiquitous components of the extracellular matrix and play an important role in tissue homeostasis and signaling. The sequence is that of Exostosin-1 (EXT1) from Bos taurus (Bovine).